Reading from the N-terminus, the 207-residue chain is Ribonuclease HII (207 aa).

Residues 5-207 (PLIIGVDEAG…APVRALLRPC (203 aa)) enclose the RNase H type-2 domain. Positions 11, 12, and 117 each coordinate a divalent metal cation.

This sequence belongs to the RNase HII family. Requires Mn(2+) as cofactor. Mg(2+) is required as a cofactor.

It is found in the cytoplasm. It catalyses the reaction Endonucleolytic cleavage to 5'-phosphomonoester.. Endonuclease that specifically degrades the RNA of RNA-DNA hybrids. This chain is Ribonuclease HII, found in Hyphomonas neptunium (strain ATCC 15444).